Reading from the N-terminus, the 277-residue chain is Large ribosomal subunit protein uL2 (277 aa).

The segment at 222 to 277 (GVTMNPVDHPHGGGEGRTSGGRHPVTPWGKPTKGKKTRSNKSTNKFILISRHKRKK) is disordered.

It belongs to the universal ribosomal protein uL2 family. In terms of assembly, part of the 50S ribosomal subunit. Forms a bridge to the 30S subunit in the 70S ribosome.

Its function is as follows. One of the primary rRNA binding proteins. Required for association of the 30S and 50S subunits to form the 70S ribosome, for tRNA binding and peptide bond formation. It has been suggested to have peptidyltransferase activity; this is somewhat controversial. Makes several contacts with the 16S rRNA in the 70S ribosome. The protein is Large ribosomal subunit protein uL2 of Rhodopseudomonas palustris (strain BisB18).